A 1108-amino-acid chain; its full sequence is Eukaryotic translation initiation factor 2-alpha kinase 3 (1108 aa).

Residues 1 to 27 (MERATQPRPRALLLLFLLLGCAAGISA) form the signal peptide. Topologically, residues 28–506 (VARARSLLAP…HYSKNIRKKD (479 aa)) are lumenal. Positions 71–92 (EALPAASGEQESRATESDDDVE) are disordered. N-linked (GlcNAc...) asparagine glycosylation occurs at Asn253. The chain crosses the membrane as a helical span at residues 507-527 (PILLLHWWKEIFGTILLCIVA). Residues 528-1108 (TTFIVRRLFH…SSTFSPLPGN (581 aa)) lie on the Cytoplasmic side of the membrane. The segment at 542–563 (RQRKESETQCQTESKYDSVSAD) is disordered. Residues 585–1069 (FEPIQCMGRG…ATDIIENAVF (485 aa)) enclose the Protein kinase domain. 591-599 (MGRGGFGVV) contributes to the ATP binding site. Position 611 is a phosphotyrosine; by autocatalysis (Tyr611). Lys614 contacts ATP. Residues 639–880 (EHPGIVRYFN…SPKVYLYIQM (242 aa)) form an insert loop region. Ser707 is modified (phosphoserine). Disordered stretches follow at residues 772-818 (DEGH…RMNR) and 832-856 (FKHSSSRSSSEATLSTSPTRPTTLS). Positions 785–798 (SPYTRSREGTSSSI) are enriched in polar residues. Thr794 bears the Phosphothreonine mark. Low complexity predominate over residues 837 to 856 (SRSSSEATLSTSPTRPTTLS). The Proton acceptor role is filled by Asp929. Thr974 carries the post-translational modification Phosphothreonine. The interval 1080-1108 (LRQRSRSLSSSGTKHSRQPSSTFSPLPGN) is disordered. Ser1086 bears the Phosphoserine mark. Residues 1097–1108 (QPSSTFSPLPGN) are compositionally biased toward polar residues.

This sequence belongs to the protein kinase superfamily. Ser/Thr protein kinase family. GCN2 subfamily. Forms dimers with HSPA5/BIP in resting cells. Homotetramerizes in response to endoplasmic reticulum (ER) stress, leading to its activation. Interacts with HSP90B1/GRP94. Interacts with DNAJC3; inhibiting EIF2AK3/PERK activity. Interacts with ATAD3A; ATAD3A and EIF2S1/eIF-2-alpha occupy a common binding site within the cytoplasmic loop of EIF2AK3/PERK, leading to prevent EIF2AK3/PERK association with its substrate EIF2S1/eIF-2-alpha. Interacts with MFN2. Interacts with TMEM33. Interacts with PDIA6. Interacts with LACC1. Oligomerization of the N-terminal ER luminal domain by ER stress promotes EIF2AK3/PERK trans-autophosphorylation of the C-terminal cytoplasmic kinase domain at multiple residues including Thr-974 on the kinase activation loop. Autophosphorylated at Tyr-611 following endoplasmic reticulum stress, leading to activate its activity. Dephosphorylated at Tyr-611 by PTPN1/PTP1B, leading to inactivate its enzyme activity. Phosphorylation at Thr-794 by AKT (AKT1, AKT2 and/or AKT3) inactivates EIF2AK3/PERK. Post-translationally, ADP-ribosylated by PARP16 upon ER stress, which increases kinase activity. In terms of tissue distribution, ubiquitous.

It is found in the endoplasmic reticulum membrane. The catalysed reaction is L-seryl-[protein] + ATP = O-phospho-L-seryl-[protein] + ADP + H(+). The enzyme catalyses L-threonyl-[protein] + ATP = O-phospho-L-threonyl-[protein] + ADP + H(+). It carries out the reaction L-tyrosyl-[protein] + ATP = O-phospho-L-tyrosyl-[protein] + ADP + H(+). Inhibited by HSPA5/BIP in absence of stress. Perturbation in protein folding in the endoplasmic reticulum (ER) promotes reversible dissociation from HSPA5/BIP and oligomerization, resulting in trans-autophosphorylation and kinase activity induction. Inactivated following phosphorylation at Thr-794 by AKT (AKT1, AKT2 and/or AKT3). Inhibited by ATAD3A at mitochondria-endoplasmic reticulum contact sites, providing a safe haven for mitochondrial protein translation during ER stress. Its function is as follows. Metabolic-stress sensing protein kinase that phosphorylates the alpha subunit of eukaryotic translation initiation factor 2 (EIF2S1/eIF-2-alpha) in response to various stress, such as unfolded protein response (UPR). Key effector of the integrated stress response (ISR) to unfolded proteins: EIF2AK3/PERK specifically recognizes and binds misfolded proteins, leading to its activation and EIF2S1/eIF-2-alpha phosphorylation. EIF2S1/eIF-2-alpha phosphorylation in response to stress converts EIF2S1/eIF-2-alpha in a global protein synthesis inhibitor, leading to a global attenuation of cap-dependent translation, while concomitantly initiating the preferential translation of ISR-specific mRNAs, such as the transcriptional activators ATF4 and QRICH1, and hence allowing ATF4- and QRICH1-mediated reprogramming. The EIF2AK3/PERK-mediated unfolded protein response increases mitochondrial oxidative phosphorylation by promoting ATF4-mediated expression of COX7A2L/SCAF1, thereby increasing formation of respiratory chain supercomplexes. In contrast to most subcellular compartments, mitochondria are protected from the EIF2AK3/PERK-mediated unfolded protein response due to EIF2AK3/PERK inhibition by ATAD3A at mitochondria-endoplasmic reticulum contact sites. In addition to EIF2S1/eIF-2-alpha, also phosphorylates NFE2L2/NRF2 in response to stress, promoting release of NFE2L2/NRF2 from the BCR(KEAP1) complex, leading to nuclear accumulation and activation of NFE2L2/NRF2. Serves as a critical effector of unfolded protein response (UPR)-induced G1 growth arrest due to the loss of cyclin-D1 (CCND1). Involved in control of mitochondrial morphology and function. The chain is Eukaryotic translation initiation factor 2-alpha kinase 3 (Eif2ak3) from Rattus norvegicus (Rat).